The sequence spans 742 residues: Zinc finger MYND domain-containing protein 15 (742 aa).

The interval 109–199 is disordered; the sequence is LEDGEEGEEE…QKRKGQRSEA (91 aa). Positions 110-127 are enriched in acidic residues; sequence EDGEEGEEEEEEDEEEEK. Positions 151–161 are enriched in polar residues; that stretch reads SRESPQETNPP. A compositionally biased stretch (basic and acidic residues) spans 166–189; sequence EAAREAGGGKDGCREDRVENETRP. Positions 313, 316, 328, 331, 337, 341, 355, and 359 each coordinate Zn(2+). The MYND-type zinc finger occupies 313-359; sequence CHVCHRHSFEAKLTPCPQCSAVLYCGEACLRADWQRCPDDVSHRFWC. Disordered stretches follow at residues 565 to 590 and 701 to 742; these read EVSV…GRRD and QGSG…RRRK. The span at 708–724 shows a compositional bias: pro residues; the sequence is APGPPPPSPTPSAPPAP. The span at 725-742 shows a compositional bias: basic residues; sequence TRRRRGEKKPGRGARRRK.

In terms of assembly, interacts with HDAC1, HDAC3, HDAC6 and, to a lesser extent, with HDAC7.

The protein resides in the nucleus. It localises to the cytoplasm. Functionally, acts as a transcriptional repressor through interaction with histone deacetylases (HDACs). May be important for spermiogenesis. In Homo sapiens (Human), this protein is Zinc finger MYND domain-containing protein 15 (ZMYND15).